Reading from the N-terminus, the 673-residue chain is ATP-dependent zinc metalloprotease FtsH (673 aa).

Residues 1 to 7 (MNGFFKN) are Cytoplasmic-facing. A helical membrane pass occupies residues 8 to 28 (LSLWLVIGLLMVMLFNLFNSP). Residues 29–100 (QGPGQSITFS…DVREPEGTPM (72 aa)) are Periplasmic-facing. The chain crosses the membrane as a helical span at residues 101 to 121 (LMQILISWFPMLLLIAVWIYF). Topologically, residues 122–673 (MRQMQSGGGR…DTPEGDDKDR (552 aa)) are cytoplasmic. 194-201 (GPPGTGKT) is a binding site for ATP. His-416 contacts Zn(2+). Residue Glu-417 is part of the active site. His-420 and Asp-492 together coordinate Zn(2+). Residues 601–673 (ALKPLKKKDE…DTPEGDDKDR (73 aa)) form a disordered region. Polar residues predominate over residues 648-660 (STRTATEASTQEV). A compositionally biased stretch (basic and acidic residues) spans 661 to 673 (VSKDTPEGDDKDR).

In the central section; belongs to the AAA ATPase family. It in the C-terminal section; belongs to the peptidase M41 family. Homohexamer. It depends on Zn(2+) as a cofactor.

The protein localises to the cell inner membrane. Acts as a processive, ATP-dependent zinc metallopeptidase for both cytoplasmic and membrane proteins. Plays a role in the quality control of integral membrane proteins. The polypeptide is ATP-dependent zinc metalloprotease FtsH (Magnetococcus marinus (strain ATCC BAA-1437 / JCM 17883 / MC-1)).